Reading from the N-terminus, the 150-residue chain is Flagellar assembly factor FliW (150 aa).

The protein belongs to the FliW family. In terms of assembly, interacts with translational regulator CsrA and flagellin(s).

The protein resides in the cytoplasm. In terms of biological role, acts as an anti-CsrA protein, binds CsrA and prevents it from repressing translation of its target genes, one of which is flagellin. Binds to flagellin and participates in the assembly of the flagellum. The chain is Flagellar assembly factor FliW from Leptospira interrogans serogroup Icterohaemorrhagiae serovar copenhageni (strain Fiocruz L1-130).